A 247-amino-acid polypeptide reads, in one-letter code: tRNA pseudouridine synthase A (247 aa).

Asp-53 functions as the Nucleophile in the catalytic mechanism. Tyr-112 provides a ligand contact to substrate.

This sequence belongs to the tRNA pseudouridine synthase TruA family. Homodimer.

The catalysed reaction is uridine(38/39/40) in tRNA = pseudouridine(38/39/40) in tRNA. In terms of biological role, formation of pseudouridine at positions 38, 39 and 40 in the anticodon stem and loop of transfer RNAs. The sequence is that of tRNA pseudouridine synthase A from Anaplasma marginale (strain St. Maries).